The following is a 96-amino-acid chain: C-C motif chemokine 20 (96 aa).

The signal sequence occupies residues Met-1 to Ala-26. 2 disulfide bridges follow: Cys-31–Cys-58 and Cys-32–Cys-74.

Belongs to the intercrine beta (chemokine CC) family. In terms of tissue distribution, low levels in thymus and lung.

The protein localises to the secreted. In terms of biological role, acts as a ligand for C-C chemokine receptor CCR6. Signals through binding and activation of CCR6 and induces a strong chemotactic response and mobilization of intracellular calcium ions. The ligand-receptor pair CCL20-CCR6 is responsible for the chemotaxis of dendritic cells (DC), effector/memory T-cells and B-cells and plays an important role at skin and mucosal surfaces under homeostatic and inflammatory conditions, as well as in pathology, including cancer and autoimmune diseases. CCL20 acts as a chemotactic factor that attracts lymphocytes and, slightly, neutrophils, but not monocytes. Involved in the recruitment of both the pro-inflammatory IL17 producing helper T-cells (Th17) and the regulatory T-cells (Treg) to sites of inflammation. Required for optimal migration of thymic natural regulatory T cells (nTregs) and DN1 early thymocyte progenitor cells. Positively regulates sperm motility and chemotaxis via its binding to CCR6 which triggers Ca2+ mobilization in the sperm which is important for its motility. May be involved in formation and function of the mucosal lymphoid tissues by attracting lymphocytes and dendritic cells towards epithelial cells. The chain is C-C motif chemokine 20 (Ccl20) from Rattus norvegicus (Rat).